Here is a 763-residue protein sequence, read N- to C-terminus: Nibrin (763 aa).

The FHA domain maps to 22–81 (YVVGRKNCAILIPEDQSISRCHATLSVSHPSANLGQTNAASVLSIKDSSKYGTTVNGDKM). 2 BRCT domains span residues 102–179 (SKYR…CELL) and 215–324 (KRKS…NPRR). 3 disordered regions span residues 389–496 (VKET…SSQT), 535–593 (SKAA…SEIE), and 738–763 (QTQQVREESLAEDLFRYNPKPSKRRR). Basic and acidic residues predominate over residues 423–433 (LFREDETDTRK). The segment covering 434–443 (NTPSLLPTKS) has biased composition (polar residues). Positions 469-474 (AKKRDR) match the Nuclear localization signal motif. Residues 473–482 (DRAEDEKEAS) are compositionally biased toward basic and acidic residues. Residues 742–752 (VREESLAEDLF) show a composition bias toward basic and acidic residues. The FxF/Y motif signature appears at 748–757 (AEDLFRYNPK).

This sequence belongs to the Nibrin family. In terms of assembly, component of the MRN complex composed of two heterodimers rad50 and mre11 associated with a single nbn.

It localises to the nucleus. The protein resides in the chromosome. Its subcellular location is the PML body. The protein localises to the telomere. Component of the MRN complex, which plays a central role in double-strand break (DSB) repair, DNA recombination, maintenance of telomere integrity and meiosis. The MRN complex is involved in the repair of DNA double-strand breaks (DSBs) via homologous recombination (HR), an error-free mechanism which primarily occurs during S and G2 phases. The complex (1) mediates the end resection of damaged DNA, which generates proper single-stranded DNA, a key initial steps in HR, and is (2) required for the recruitment of other repair factors and efficient activation of ATM and ATR upon DNA damage. The MRN complex possesses single-strand endonuclease activity and double-strand-specific 3'-5' exonuclease activity, which are provided by MRE11, to initiate end resection, which is required for single-strand invasion and recombination. Within the MRN complex, nbn acts as a protein-protein adapter, which specifically recognizes and binds phosphorylated proteins, promoting their recruitment to DNA damage sites. Recruits mre11 and rad50 components of the MRN complex to DSBs in response to DNA damage. Promotes the recruitment of PI3/PI4-kinase family members atm, atr, and probably DNA-PKcs to the DNA damage sites, activating their functions. Mediates the recruitment of phosphorylated rbbp8/CtIP to DSBs, leading to cooperation between the MRN complex and rbbp8/CtIP to initiate end resection. The MRN complex promotes recruitment of topbp1 to DNA damage sites. The MRN complex and rbbp8/CtIP are also required for chromosome alignment during metaphase. The chain is Nibrin from Xenopus laevis (African clawed frog).